The primary structure comprises 494 residues: Cytochrome P450 2A13 (494 aa).

Asn297 lines the substrate pocket. Position 439 (Cys439) interacts with heme.

Belongs to the cytochrome P450 family. Heme is required as a cofactor. As to expression, expressed in liver and a number of extrahepatic tissues, including nasal mucosa, lung, trachea, brain, mammary gland, prostate, testis, and uterus, but not in heart, kidney, bone marrow, colon, small intestine, spleen, stomach, thymus, or skeletal muscle.

It is found in the endoplasmic reticulum membrane. It localises to the microsome membrane. The catalysed reaction is an organic molecule + reduced [NADPH--hemoprotein reductase] + O2 = an alcohol + oxidized [NADPH--hemoprotein reductase] + H2O + H(+). Exhibits a coumarin 7-hydroxylase activity. Active in the metabolic activation of hexamethylphosphoramide, N,N-dimethylaniline, 2'-methoxyacetophenone, N-nitrosomethylphenylamine, and the tobacco-specific carcinogen, 4-(methylnitrosamino)-1-(3-pyridyl)-1-butanone. Possesses phenacetin O-deethylation activity. In Homo sapiens (Human), this protein is Cytochrome P450 2A13 (CYP2A13).